A 149-amino-acid polypeptide reads, in one-letter code: Ribonuclease H (149 aa).

One can recognise an RNase H type-1 domain in the interval 1-145; sequence MKKVIIYTDG…CDKLANEAMD (145 aa). Mg(2+)-binding residues include D9, E50, D72, and D137.

This sequence belongs to the RNase H family. Monomer. Mg(2+) serves as cofactor.

Its subcellular location is the cytoplasm. It carries out the reaction Endonucleolytic cleavage to 5'-phosphomonoester.. Endonuclease that specifically degrades the RNA of RNA-DNA hybrids. This chain is Ribonuclease H, found in Clostridium botulinum (strain ATCC 19397 / Type A).